The primary structure comprises 493 residues: Lysine--tRNA ligase (493 aa).

Residues E402 and E409 each coordinate Mg(2+).

The protein belongs to the class-II aminoacyl-tRNA synthetase family. In terms of assembly, homodimer. It depends on Mg(2+) as a cofactor.

It localises to the cytoplasm. The catalysed reaction is tRNA(Lys) + L-lysine + ATP = L-lysyl-tRNA(Lys) + AMP + diphosphate. The polypeptide is Lysine--tRNA ligase (Ureaplasma urealyticum serovar 10 (strain ATCC 33699 / Western)).